A 341-amino-acid chain; its full sequence is Glycerol-3-phosphate dehydrogenase [NAD(P)+] (341 aa).

Residues S15, W16, R36, and K110 each contribute to the NADPH site. K110, G139, and S141 together coordinate sn-glycerol 3-phosphate. A143 provides a ligand contact to NADPH. Sn-glycerol 3-phosphate contacts are provided by K194, D247, S257, R258, and N259. The active-site Proton acceptor is K194. An NADPH-binding site is contributed by R258. 2 residues coordinate NADPH: V282 and E284.

The protein belongs to the NAD-dependent glycerol-3-phosphate dehydrogenase family.

It is found in the cytoplasm. It carries out the reaction sn-glycerol 3-phosphate + NAD(+) = dihydroxyacetone phosphate + NADH + H(+). The enzyme catalyses sn-glycerol 3-phosphate + NADP(+) = dihydroxyacetone phosphate + NADPH + H(+). It participates in membrane lipid metabolism; glycerophospholipid metabolism. In terms of biological role, catalyzes the reduction of the glycolytic intermediate dihydroxyacetone phosphate (DHAP) to sn-glycerol 3-phosphate (G3P), the key precursor for phospholipid synthesis. This chain is Glycerol-3-phosphate dehydrogenase [NAD(P)+], found in Stenotrophomonas maltophilia (strain R551-3).